The sequence spans 284 residues: 2,3,4,5-tetrahydropyridine-2,6-dicarboxylate N-succinyltransferase (284 aa).

Positions 111 and 148 each coordinate substrate.

This sequence belongs to the transferase hexapeptide repeat family. Homotrimer.

The protein localises to the cytoplasm. It carries out the reaction (S)-2,3,4,5-tetrahydrodipicolinate + succinyl-CoA + H2O = (S)-2-succinylamino-6-oxoheptanedioate + CoA. The protein operates within amino-acid biosynthesis; L-lysine biosynthesis via DAP pathway; LL-2,6-diaminopimelate from (S)-tetrahydrodipicolinate (succinylase route): step 1/3. The chain is 2,3,4,5-tetrahydropyridine-2,6-dicarboxylate N-succinyltransferase from Mesorhizobium japonicum (strain LMG 29417 / CECT 9101 / MAFF 303099) (Mesorhizobium loti (strain MAFF 303099)).